A 154-amino-acid polypeptide reads, in one-letter code: Small heat shock protein IbpB (154 aa).

In terms of domain architecture, sHSP spans 26–137; that stretch reads GQEPQGFPPY…QPQRIAIGSA (112 aa).

The protein belongs to the small heat shock protein (HSP20) family. In terms of assembly, homodimer. Forms homomultimers of about 100-150 subunits at optimal growth temperatures. Conformation changes to oligomers at high temperatures or high ionic concentrations. The decrease in size of the multimers is accompanied by an increase in chaperone activity.

It is found in the cytoplasm. Functionally, associates with aggregated proteins, together with IbpA, to stabilize and protect them from irreversible denaturation and extensive proteolysis during heat shock and oxidative stress. Aggregated proteins bound to the IbpAB complex are more efficiently refolded and reactivated by the ATP-dependent chaperone systems ClpB and DnaK/DnaJ/GrpE. Its activity is ATP-independent. This Yersinia pseudotuberculosis serotype O:1b (strain IP 31758) protein is Small heat shock protein IbpB.